A 398-amino-acid chain; its full sequence is S-adenosylmethionine synthase (398 aa).

Histidine 16 is a binding site for ATP. Aspartate 18 serves as a coordination point for Mg(2+). Glutamate 51 serves as a coordination point for K(+). L-methionine-binding residues include glutamate 64 and glutamine 108. The tract at residues 108–118 (QSADIAQGVDA) is flexible loop. Residues 176–178 (DSK), 242–243 (KF), aspartate 251, 257–258 (RK), alanine 274, and lysine 278 each bind ATP. Residue aspartate 251 participates in L-methionine binding. Residue lysine 282 coordinates L-methionine.

The protein belongs to the AdoMet synthase family. Homotetramer; dimer of dimers. Mg(2+) serves as cofactor. It depends on K(+) as a cofactor.

The protein localises to the cytoplasm. The enzyme catalyses L-methionine + ATP + H2O = S-adenosyl-L-methionine + phosphate + diphosphate. It participates in amino-acid biosynthesis; S-adenosyl-L-methionine biosynthesis; S-adenosyl-L-methionine from L-methionine: step 1/1. In terms of biological role, catalyzes the formation of S-adenosylmethionine (AdoMet) from methionine and ATP. The overall synthetic reaction is composed of two sequential steps, AdoMet formation and the subsequent tripolyphosphate hydrolysis which occurs prior to release of AdoMet from the enzyme. This Rhodopseudomonas palustris (strain BisB5) protein is S-adenosylmethionine synthase.